The chain runs to 354 residues: Uroporphyrinogen decarboxylase (354 aa).

Substrate-binding positions include 27–31 (RQAGR), D77, Y154, T209, and H327.

It belongs to the uroporphyrinogen decarboxylase family. As to quaternary structure, homodimer.

It is found in the cytoplasm. The catalysed reaction is uroporphyrinogen III + 4 H(+) = coproporphyrinogen III + 4 CO2. The protein operates within porphyrin-containing compound metabolism; protoporphyrin-IX biosynthesis; coproporphyrinogen-III from 5-aminolevulinate: step 4/4. In terms of biological role, catalyzes the decarboxylation of four acetate groups of uroporphyrinogen-III to yield coproporphyrinogen-III. The sequence is that of Uroporphyrinogen decarboxylase from Klebsiella pneumoniae subsp. pneumoniae (strain ATCC 700721 / MGH 78578).